Reading from the N-terminus, the 206-residue chain is Adenylate kinase (206 aa).

The disordered stretch occupies residues 1–21 (MSQPKILLLGAPGAGKGTQSS). 13 to 18 (GAGKGT) lines the ATP pocket. Residues 33–61 (TTGDALRANKDMETEHGTPREFMEAGELV) form an NMP region. AMP contacts are provided by residues threonine 34, arginine 39, 59–61 (ELV), 84–87 (GYPR), and glutamine 91. Positions 120 to 153 (GRRMDPETGDIYHTEFNMPDDEEVRERLVQRDDD) are LID. ATP-binding positions include arginine 121 and 130–131 (IY). 2 residues coordinate AMP: arginine 150 and arginine 161. Alanine 189 is an ATP binding site.

The protein belongs to the adenylate kinase family. Monomer.

The protein localises to the cytoplasm. The catalysed reaction is AMP + ATP = 2 ADP. The protein operates within purine metabolism; AMP biosynthesis via salvage pathway; AMP from ADP: step 1/1. In terms of biological role, catalyzes the reversible transfer of the terminal phosphate group between ATP and AMP. Plays an important role in cellular energy homeostasis and in adenine nucleotide metabolism. This is Adenylate kinase from Natronomonas pharaonis (strain ATCC 35678 / DSM 2160 / CIP 103997 / JCM 8858 / NBRC 14720 / NCIMB 2260 / Gabara) (Halobacterium pharaonis).